A 622-amino-acid chain; its full sequence is WD repeat-containing protein 70 (622 aa).

A compositionally biased stretch (basic and acidic residues) spans 36–55 (RTAVERSKQTLEAREKEEQL). A disordered region spans residues 36 to 141 (RTAVERSKQT…DNPVKDIPDS (106 aa)). Positions 67 to 84 (SSSGQKKTKASGSSSGSE) are enriched in low complexity. The segment covering 120–132 (SDDEDDEEHEDDD) has biased composition (acidic residues). WD repeat units follow at residues 148–187 (HGTK…ASLQ), 195–236 (CECH…ECVK), 249–289 (GHTA…KHKG), 298–337 (GKPV…HTKF), 344–383 (TPGT…NPLN), 387–434 (GLEN…KIYE), and 437–476 (VTEA…QRGA). The span at 508–533 (REPRQRSTRKQLEKDRLDPVKSHKPE) shows a compositional bias: basic and acidic residues. Disordered stretches follow at residues 508-549 (REPR…GTHG) and 602-622 (AEVD…KRKI). Positions 539–549 (PGRGGRVGTHG) are enriched in gly residues. Residues 604 to 614 (VDSDEEEPDNE) show a composition bias toward acidic residues.

This sequence belongs to the WD repeat GAD-1 family.

This Xenopus laevis (African clawed frog) protein is WD repeat-containing protein 70 (wdr70).